We begin with the raw amino-acid sequence, 464 residues long: Cytoplasmic tRNA 2-thiolation protein 2 (464 aa).

The protein belongs to the CTU2/NCS2 family.

The protein localises to the cytoplasm. Its pathway is tRNA modification; 5-methoxycarbonylmethyl-2-thiouridine-tRNA biosynthesis. In terms of biological role, plays a central role in 2-thiolation of mcm(5)S(2)U at tRNA wobble positions of tRNA(Lys), tRNA(Glu) and tRNA(Gln). May act by forming a heterodimer with NCS6/CTU1 that ligates sulfur from thiocarboxylated URM1 onto the uridine of tRNAs at wobble position. This is Cytoplasmic tRNA 2-thiolation protein 2 from Oryza sativa subsp. indica (Rice).